A 260-amino-acid chain; its full sequence is Carbonic anhydrase 3 (260 aa).

Position 2 is an N-acetylalanine (Ala2). Positions 3–259 constitute an Alpha-carbonic anhydrase domain; it reads KEWGYASHNG…IKGRVVRASF (257 aa). Phosphoserine occurs at positions 29, 43, 48, 50, and 55. The segment at 64–67 is involved in proton transfer; that stretch reads KTCR. At Thr73 the chain carries Phosphothreonine. The Zn(2+) site is built by His94, His96, and His119. The residue at position 127 (Tyr127) is a Phosphotyrosine. Phosphothreonine is present on Thr129. 2 positions are modified to S-glutathionyl cysteine: Cys182 and Cys187. A substrate-binding site is contributed by 198 to 199; that stretch reads TT. A Phosphothreonine modification is found at Thr216. Ser219 carries the post-translational modification Phosphoserine.

This sequence belongs to the alpha-carbonic anhydrase family. Requires Zn(2+) as cofactor. In terms of processing, S-thiolated both by thiol-disulfide exchange with glutathione disulfide and by oxyradical-initiated S-thiolation with reduced glutathione. Post-translationally, S-glutathionylated in hepatocytes under oxidative stress. Expressed in liver and muscle.

Its subcellular location is the cytoplasm. It carries out the reaction hydrogencarbonate + H(+) = CO2 + H2O. Its activity is regulated as follows. Inhibited by acetazolamide. Its function is as follows. Reversible hydration of carbon dioxide. The polypeptide is Carbonic anhydrase 3 (Ca3) (Rattus norvegicus (Rat)).